The following is a 240-amino-acid chain: Leucyl/phenylalanyl-tRNA--protein transferase (240 aa).

Belongs to the L/F-transferase family.

It is found in the cytoplasm. It catalyses the reaction N-terminal L-lysyl-[protein] + L-leucyl-tRNA(Leu) = N-terminal L-leucyl-L-lysyl-[protein] + tRNA(Leu) + H(+). The enzyme catalyses N-terminal L-arginyl-[protein] + L-leucyl-tRNA(Leu) = N-terminal L-leucyl-L-arginyl-[protein] + tRNA(Leu) + H(+). It carries out the reaction L-phenylalanyl-tRNA(Phe) + an N-terminal L-alpha-aminoacyl-[protein] = an N-terminal L-phenylalanyl-L-alpha-aminoacyl-[protein] + tRNA(Phe). Its function is as follows. Functions in the N-end rule pathway of protein degradation where it conjugates Leu, Phe and, less efficiently, Met from aminoacyl-tRNAs to the N-termini of proteins containing an N-terminal arginine or lysine. In Maridesulfovibrio salexigens (strain ATCC 14822 / DSM 2638 / NCIMB 8403 / VKM B-1763) (Desulfovibrio salexigens), this protein is Leucyl/phenylalanyl-tRNA--protein transferase.